A 120-amino-acid polypeptide reads, in one-letter code: MVTVEERLDNLEKKVEKQAFQLRLVQQLAADYDRFGLFDQVLAYDLSEKQYQELRELTSQYTDKIKNGEEVSLHNFTEEFKRILKDIEKEVDFEKFISLWLKGPEEGFGFSKALHNHFFN.

This is an uncharacterized protein from Bacillus subtilis (strain 168).